A 392-amino-acid chain; its full sequence is N-acyl-phosphatidylethanolamine-hydrolyzing phospholipase D (392 aa).

Residue Met1 is modified to N-acetylmethionine. Residues 1–16 (MDENETNQLLMTSNQY) are compositionally biased toward polar residues. Residues 1–39 (MDENETNQLLMTSNQYPKEAVRKRQNSRNSGGSDSSRFS) form a disordered region. A compositionally biased stretch (low complexity) spans 27-36 (SRNSGGSDSS). The Zn(2+) site is built by His183 and His185. Tyr186 provides a ligand contact to an N-acyl-1,2-diacyl-sn-glycero-3-phosphoethanolamine. 3 residues coordinate Zn(2+): Asp187, His188, and His251. Residues Lys254 and Met258 each coordinate deoxycholate. Asp282 is a Zn(2+) binding site. His319 is a binding site for an N-acyl-1,2-diacyl-sn-glycero-3-phosphoethanolamine. Residue His341 coordinates Zn(2+). Position 346 (Ala346) interacts with deoxycholate.

It belongs to the NAPE-PLD family. In terms of assembly, homodimer. Bile acids promote the assembly of inactive monomers into an active dimer and enable catalysis. The cofactor is Zn(2+). In terms of tissue distribution, widely expressed. Highest expression in brain, kidney and testis (at protein level). Expressed in adipose tissue (at protein level).

It is found in the golgi apparatus membrane. It localises to the early endosome membrane. Its subcellular location is the nucleus envelope. The protein resides in the nucleus. The protein localises to the nucleoplasm. The catalysed reaction is an N-acyl-1,2-diacyl-sn-glycero-3-phosphoethanolamine + H2O = an N-acylethanolamine + a 1,2-diacyl-sn-glycero-3-phosphate + H(+). It carries out the reaction N-butanoyl-1-hexadecanoyl-2-(9Z,12Z-octadecadienoyl)-sn-glycero-3-phosphoethanolamine + H2O = N-butanoyl ethanolamine + 1-hexadecanoyl-2-(9Z,12Z-octadecadienoyl)-sn-glycero-3-phosphate + H(+). It catalyses the reaction N-hexanoyl-1-hexadecanoyl-2-(9Z,12Z-octadecadienoyl)-sn-glycero-3-phosphoethanolamine + H2O = N-hexanoyl ethanolamine + 1-hexadecanoyl-2-(9Z,12Z-octadecadienoyl)-sn-glycero-3-phosphate + H(+). The enzyme catalyses N-octanoyl-1-hexadecanoyl-2-(9Z,12Z-octadecadienoyl)-sn-glycero-3-phosphoethanolamine + H2O = N-octanoyl ethanolamine + 1-hexadecanoyl-2-(9Z,12Z-octadecadienoyl)-sn-glycero-3-phosphate + H(+). The catalysed reaction is N-decanoyl-1-hexadecanoyl-2-(9Z,12Z-octadecadienoyl)-sn-glycero-3-phosphoethanolamine + H2O = N-decanoyl ethanolamine + 1-hexadecanoyl-2-(9Z,12Z-octadecadienoyl)-sn-glycero-3-phosphate + H(+). It carries out the reaction N-dodecanoyl-1,2-di-(9Z-octadecenoyl)-sn-glycero-3-phosphoethanolamine + H2O = N-dodecanoylethanolamine + 1,2-di-(9Z-octadecenoyl)-sn-glycero-3-phosphate + H(+). It catalyses the reaction N-tetradecanoyl-1,2-di-(9Z-octadecenoyl)-sn-glycero-3-phosphoethanolamine + H2O = N-tetradecanoylethanolamine + 1,2-di-(9Z-octadecenoyl)-sn-glycero-3-phosphate + H(+). The enzyme catalyses N-hexadecanoyl-1,2-di-(9Z-octadecenoyl)-sn-glycero-3-phosphoethanolamine + H2O = N-hexadecanoylethanolamine + 1,2-di-(9Z-octadecenoyl)-sn-glycero-3-phosphate + H(+). The catalysed reaction is N,1-dihexadecanoyl-2-(9Z,12Z-octadecadienoyl)-sn-glycero-3-phosphoethanolamine + H2O = 1-hexadecanoyl-2-(9Z,12Z-octadecadienoyl)-sn-glycero-3-phosphate + N-hexadecanoylethanolamine + H(+). It carries out the reaction N-octadecanoyl-1,2-di-(9Z-octadecenoyl)-sn-glycero-3-phosphoethanolamine + H2O = N-octadecanoyl ethanolamine + 1,2-di-(9Z-octadecenoyl)-sn-glycero-3-phosphate + H(+). It catalyses the reaction N,1,2-tri-(9Z-octadecenoyl)-sn-glycero-3-phosphoethanolamine + H2O = N-(9Z-octadecenoyl) ethanolamine + 1,2-di-(9Z-octadecenoyl)-sn-glycero-3-phosphate + H(+). The enzyme catalyses N-(5Z,8Z,11Z,14Z-eicosatetraenoyl)-1,2-diacyl-sn-glycero-3-phosphoethanolamine + H2O = N-(5Z,8Z,11Z,14Z-eicosatetraenoyl)-ethanolamine + a 1,2-diacyl-sn-glycero-3-phosphate + H(+). The catalysed reaction is N-(5Z,8Z,11Z,14Z-eicosatetraenoyl)-1,2-di-(9Z-octadecenoyl)-sn-glycero-3-phosphoethanolamine + H2O = N-(5Z,8Z,11Z,14Z-eicosatetraenoyl)-ethanolamine + 1,2-di-(9Z-octadecenoyl)-sn-glycero-3-phosphate + H(+). It carries out the reaction 1-O-(1Z-octadecenoyl)-2-(9Z-octadecenoyl)-sn-glycero-3-phospho-N-hexadecanoyl-ethanolamine + H2O = 1-O-(1Z-octadecenoyl)-2-(9Z-octadecenoyl)-sn-glycero-3-phosphate + N-hexadecanoylethanolamine + H(+). It catalyses the reaction N,1-diacyl-sn-glycero-3-phosphoethanolamine + H2O = an N-acylethanolamine + a 1-acyl-sn-glycero-3-phosphate + H(+). The enzyme catalyses N,1-dihexadecanoyl-sn-glycero-3-phosphoethanolamine + H2O = N-hexadecanoylethanolamine + 1-hexadecanoyl-sn-glycero-3-phosphate + H(+). The catalysed reaction is N-(5Z,8Z,11Z,14Z-eicosatetraenoyl)-1-(9Z-octadecenoyl)-sn-glycero-3-phosphoethanolamine + H2O = N-(5Z,8Z,11Z,14Z-eicosatetraenoyl)-ethanolamine + 1-(9Z-octadecenoyl)-sn-glycero-3-phosphate + H(+). Its activity is regulated as follows. Activated by divalent cations. Activated by bile acids. Functionally, D-type phospholipase that hydrolyzes N-acyl-phosphatidylethanolamines (NAPEs) to produce bioactive N-acylethanolamines/fatty acid ethanolamides (NAEs/FAEs) and phosphatidic acid. Cleaves the terminal phosphodiester bond of diacyl- and alkenylacyl-NAPEs, primarily playing a role in the generation of long-chain saturated and monounsaturated NAEs in the brain. May control NAPE homeostasis in dopaminergic neuron membranes and regulate neuron survival, partly through RAC1 activation. As a regulator of lipid metabolism in the adipose tissue, mediates the crosstalk between adipocytes, gut microbiota and immune cells to control body temperature and weight. In particular, regulates energy homeostasis by promoting cold-induced brown or beige adipocyte differentiation program to generate heat from fatty acids and glucose. Has limited D-type phospholipase activity toward N-acyl lyso-NAPEs. This Bos taurus (Bovine) protein is N-acyl-phosphatidylethanolamine-hydrolyzing phospholipase D (NAPEPLD).